We begin with the raw amino-acid sequence, 206 residues long: Octanoyltransferase (206 aa).

Residues 30 to 206 (PETNDEIWLV…EFVTLLNNSI (177 aa)) enclose the BPL/LPL catalytic domain. Substrate-binding positions include 69-76 (RGGQVTYH), 137-139 (SLG), and 150-152 (GIA). The Acyl-thioester intermediate role is filled by Cys168.

This sequence belongs to the LipB family.

Its subcellular location is the cytoplasm. The enzyme catalyses octanoyl-[ACP] + L-lysyl-[protein] = N(6)-octanoyl-L-lysyl-[protein] + holo-[ACP] + H(+). It functions in the pathway protein modification; protein lipoylation via endogenous pathway; protein N(6)-(lipoyl)lysine from octanoyl-[acyl-carrier-protein]: step 1/2. Functionally, catalyzes the transfer of endogenously produced octanoic acid from octanoyl-acyl-carrier-protein onto the lipoyl domains of lipoate-dependent enzymes. Lipoyl-ACP can also act as a substrate although octanoyl-ACP is likely to be the physiological substrate. This is Octanoyltransferase from Francisella tularensis subsp. holarctica (strain FTNF002-00 / FTA).